Consider the following 379-residue polypeptide: Sialidase-2 (379 aa).

The FRIP motif signature appears at 20 to 23; that stretch reads YRIP. Substrate is bound by residues arginine 21 and arginine 41. Aspartate 46 functions as the Proton acceptor in the catalytic mechanism. A BNR 1 repeat occupies 127–138; it reads VTSTDYGMNWSP. Positions 179 and 181 each coordinate substrate. Residues 197–208 form a BNR 2 repeat; that stretch reads FISLDHGHTWEL. Glutamate 218, arginine 237, and arginine 303 together coordinate substrate. Tyrosine 333 serves as the catalytic Nucleophile. Glutamate 354 is an active-site residue.

This sequence belongs to the glycosyl hydrolase 33 family. In terms of tissue distribution, detected in skeletal muscle.

Its subcellular location is the cytoplasm. It is found in the cytosol. The catalysed reaction is Hydrolysis of alpha-(2-&gt;3)-, alpha-(2-&gt;6)-, alpha-(2-&gt;8)- glycosidic linkages of terminal sialic acid residues in oligosaccharides, glycoproteins, glycolipids, colominic acid and synthetic substrates.. It carries out the reaction a ganglioside GD1a + H2O = a ganglioside GM1 + N-acetylneuraminate. The enzyme catalyses a ganglioside GM1 + H2O = a ganglioside GA1 + N-acetylneuraminate. It catalyses the reaction a ganglioside GT1b + H2O = a ganglioside GD1b + N-acetylneuraminate. The catalysed reaction is a ganglioside GD1b + H2O = a ganglioside GM1 + N-acetylneuraminate. It carries out the reaction a ganglioside GD3 + H2O = a ganglioside GM3 + N-acetylneuraminate. The enzyme catalyses a ganglioside GM3 + H2O = a beta-D-galactosyl-(1-&gt;4)-beta-D-glucosyl-(1&lt;-&gt;1)-ceramide + N-acetylneuraminate. It catalyses the reaction a ganglioside GM2 + H2O = a ganglioside GA2 + N-acetylneuraminate. The catalysed reaction is a neolactoside IV(3)-alpha-NeuAc-nLc4Cer(d18:1(4E)) + H2O = a neolactoside nLc4Cer(d18:1(4E)) + N-acetylneuraminate. It carries out the reaction N-acetyl-alpha-neuraminosyl-(2-&gt;3)-beta-D-galactosyl-(1-&gt;4)-D-glucose + H2O = lactose + N-acetylneuraminate. In terms of biological role, exo-alpha-sialidase that catalyzes the hydrolytic cleavage of the terminal sialic acid (N-acetylneuraminic acid, Neu5Ac) of a glycan moiety in the catabolism of glycolipids, glycoproteins and oligosacharides. Recognizes sialyl linkage positions of the glycan moiety as well as the supramolecular organization of the sialoglycoconjugate. Displays preference for alpha-(2-&gt;3)-sialylated GD1a and GT1B gangliosides over alpha-(2-&gt;8)-sialylated GD1b, in both monomeric forms and micelles. Hydrolyzes monomeric GM1 ganglioside, but has no activity toward the miscellar form. Has lower sialidase activity for glycoproteins such as fetuin and TF/transferrin that carry a mixture of alpha-(2-&gt;3) and alpha-(2-&gt;6)-sialyl linkages. Cleaves milk oligosaccharide alpha-(2-&gt;3)-sialyllactose, but is inactive toward alpha-(2-&gt;6)-sialyllactose isomer. Has no activity toward colominic acid, a homomer of alpha-(2-&gt;8)-linked Neu5Ac residues. This is Sialidase-2 (Neu2) from Rattus norvegicus (Rat).